Consider the following 486-residue polypeptide: Histone acetyltransferase type B catalytic subunit DDB_G0274269 (486 aa).

Residues 27–69 adopt a coiled-coil conformation; it reads DIEELKNKDNKENKDKENKAHIKDEGEEEEQKEKKEEEEKEDD. The span at 33-50 shows a compositional bias: basic and acidic residues; sequence NKDNKENKDKENKAHIKD. The tract at residues 33–78 is disordered; the sequence is NKDNKENKDKENKAHIKDEGEEEEQKEKKEEEEKEDDGGPISFHPT. Positions 189–386 constitute an N-acetyltransferase domain; the sequence is VVFRYHEKLQ…YRISIKKRLY (198 aa). Residues 260-262 and 267-273 each bind acetyl-CoA; these read YLI and QRMGHGK. The active-site Proton donor/acceptor is the glutamate 299. A coiled-coil region spans residues 392–481; it reads DSEQIEKIKQ…KNYHKTLSSL (90 aa).

The protein belongs to the HAT1 family.

It catalyses the reaction L-lysyl-[protein] + acetyl-CoA = N(6)-acetyl-L-lysyl-[protein] + CoA + H(+). This is Histone acetyltransferase type B catalytic subunit DDB_G0274269 from Dictyostelium discoideum (Social amoeba).